A 143-amino-acid chain; its full sequence is Large ribosomal subunit protein uL11 (143 aa).

The protein belongs to the universal ribosomal protein uL11 family. Part of the ribosomal stalk of the 50S ribosomal subunit. Interacts with L10 and the large rRNA to form the base of the stalk. L10 forms an elongated spine to which L12 dimers bind in a sequential fashion forming a multimeric L10(L12)X complex. Post-translationally, one or more lysine residues are methylated.

Functionally, forms part of the ribosomal stalk which helps the ribosome interact with GTP-bound translation factors. This is Large ribosomal subunit protein uL11 from Treponema denticola (strain ATCC 35405 / DSM 14222 / CIP 103919 / JCM 8153 / KCTC 15104).